The sequence spans 364 residues: Tyrosine--tRNA ligase (364 aa).

Y39 provides a ligand contact to L-tyrosine. 2 residues coordinate ATP: H49 and W52. L-tyrosine contacts are provided by Y165, Q169, D172, and Q187. Positions 238–242 match the 'KMSKS' region motif; the sequence is KMSKS. Position 241 (K241) interacts with ATP.

Belongs to the class-I aminoacyl-tRNA synthetase family. TyrS type 4 subfamily. Homodimer.

The protein resides in the cytoplasm. It carries out the reaction tRNA(Tyr) + L-tyrosine + ATP = L-tyrosyl-tRNA(Tyr) + AMP + diphosphate + H(+). Catalyzes the attachment of tyrosine to tRNA(Tyr) in a two-step reaction: tyrosine is first activated by ATP to form Tyr-AMP and then transferred to the acceptor end of tRNA(Tyr). The protein is Tyrosine--tRNA ligase of Aeropyrum pernix (strain ATCC 700893 / DSM 11879 / JCM 9820 / NBRC 100138 / K1).